The chain runs to 80 residues: Pancreatic polypeptide (80 aa).

An N-terminal signal peptide occupies residues 1–25 (MPPRWASLLLLACSLLLLAVPPGTA). At tyrosine 61 the chain carries Tyrosine amide. Residues 65–80 (SSSRVLCEEPMGAAGC) constitute a propeptide that is removed on maturation.

This sequence belongs to the NPY family.

It is found in the secreted. Functionally, hormone secreted by pancreatic cells that acts as a regulator of pancreatic and gastrointestinal functions. In Gallus gallus (Chicken), this protein is Pancreatic polypeptide (PPY).